The sequence spans 257 residues: Cytosolic Fe-S cluster assembly factor NUBP2 homolog (257 aa).

14–21 (GKGGVGKS) provides a ligand contact to ATP. Positions 188 and 191 each coordinate [4Fe-4S] cluster.

It belongs to the Mrp/NBP35 ATP-binding proteins family. NUBP2/CFD1 subfamily. In terms of assembly, heterotetramer of 2 NUBP1 and 2 NUBP2 chains. It depends on [4Fe-4S] cluster as a cofactor.

It localises to the cytoplasm. Functionally, component of the cytosolic iron-sulfur (Fe/S) protein assembly (CIA) machinery. Required for maturation of extramitochondrial Fe-S proteins. The NUBP1-NUBP2 heterotetramer forms a Fe-S scaffold complex, mediating the de novo assembly of an Fe-S cluster and its transfer to target apoproteins. The polypeptide is Cytosolic Fe-S cluster assembly factor NUBP2 homolog (Culex quinquefasciatus (Southern house mosquito)).